A 38-amino-acid chain; its full sequence is Bacteriocin curvaticin FS47 (38 aa).

Its subcellular location is the secreted. Functionally, bacteriocin active against Listeria monocytogenes, Pediococcus, Enterococcus, Lactobacilli and Bacilli. The polypeptide is Bacteriocin curvaticin FS47 (Latilactobacillus curvatus (Lactobacillus curvatus)).